Here is a 926-residue protein sequence, read N- to C-terminus: Lipoxygenase 4, chloroplastic (926 aa).

Residues 1–58 constitute a chloroplast transit peptide; it reads MALANEIMGSRLIFERSSSLASPFHSRFSIKKKTQRTQFSINPFDPRPMRAVNSSGVV. Residues 106-228 form the PLAT domain; that stretch reads FKETLVKHLD…DHPSKRILFT (123 aa). In terms of domain architecture, Lipoxygenase spans 231-926; it reads PYLPSETPSG…CRGVPNSVSI (696 aa). Positions 585, 590, 777, 781, and 926 each coordinate Fe cation.

The protein belongs to the lipoxygenase family. Fe cation serves as cofactor. In terms of tissue distribution, expressed in leaves.

It is found in the plastid. Its subcellular location is the chloroplast. It carries out the reaction (9Z,12Z)-octadecadienoate + O2 = (13S)-hydroperoxy-(9Z,11E)-octadecadienoate. The catalysed reaction is (9Z,12Z,15Z)-octadecatrienoate + O2 = (13S)-hydroperoxy-(9Z,11E,15Z)-octadecatrienoate. Its pathway is lipid metabolism; oxylipin biosynthesis. Its function is as follows. Plant lipoxygenases may be involved in a number of diverse aspects of plant physiology including growth and development, pest resistance, and senescence or responses to wounding. Catalyzes the hydroperoxidation of lipids containing a cis,cis-1,4-pentadiene structure. 13S-lipoxygenase that can use linolenic acid as substrates. This Arabidopsis thaliana (Mouse-ear cress) protein is Lipoxygenase 4, chloroplastic (LOX4).